The primary structure comprises 541 residues: Chaperonin GroEL (541 aa).

ATP is bound by residues Thr-29–Pro-32, Asp-86–Thr-90, Gly-413, Asp-477–Leu-479, and Asp-493.

The protein belongs to the chaperonin (HSP60) family. Forms a cylinder of 14 subunits composed of two heptameric rings stacked back-to-back. Interacts with the co-chaperonin GroES.

The protein localises to the cytoplasm. It catalyses the reaction ATP + H2O + a folded polypeptide = ADP + phosphate + an unfolded polypeptide.. Together with its co-chaperonin GroES, plays an essential role in assisting protein folding. The GroEL-GroES system forms a nano-cage that allows encapsulation of the non-native substrate proteins and provides a physical environment optimized to promote and accelerate protein folding. In Clostridium botulinum (strain 657 / Type Ba4), this protein is Chaperonin GroEL.